The chain runs to 157 residues: Pyruvoyl-dependent arginine decarboxylase 1 (157 aa).

Ser41 carries the post-translational modification Pyruvic acid (Ser).

Belongs to the PdaD family. The cofactor is pyruvate.

It carries out the reaction L-arginine + H(+) = agmatine + CO2. This Archaeoglobus fulgidus (strain ATCC 49558 / DSM 4304 / JCM 9628 / NBRC 100126 / VC-16) protein is Pyruvoyl-dependent arginine decarboxylase 1 (pdaD1).